The sequence spans 420 residues: D-inositol 3-phosphate glycosyltransferase (420 aa).

Residue His-13 coordinates 1D-myo-inositol 3-phosphate. UDP-N-acetyl-alpha-D-glucosamine contacts are provided by residues 19-20 and Gly-27; that span reads QP. 1D-myo-inositol 3-phosphate contacts are provided by residues 24–29, Lys-82, Tyr-115, Thr-139, and Arg-159; that span reads DAGGMN. UDP-N-acetyl-alpha-D-glucosamine contacts are provided by Arg-233, Lys-238, and Val-294. Mg(2+) is bound by residues Phe-303, Arg-304, and Ala-306. UDP-N-acetyl-alpha-D-glucosamine contacts are provided by Glu-316 and Glu-324. Thr-330 serves as a coordination point for Mg(2+).

The protein belongs to the glycosyltransferase group 1 family. MshA subfamily. Homodimer.

It catalyses the reaction 1D-myo-inositol 3-phosphate + UDP-N-acetyl-alpha-D-glucosamine = 1D-myo-inositol 2-acetamido-2-deoxy-alpha-D-glucopyranoside 3-phosphate + UDP + H(+). Its function is as follows. Catalyzes the transfer of a N-acetyl-glucosamine moiety to 1D-myo-inositol 3-phosphate to produce 1D-myo-inositol 2-acetamido-2-deoxy-glucopyranoside 3-phosphate in the mycothiol biosynthesis pathway. The polypeptide is D-inositol 3-phosphate glycosyltransferase (Pseudarthrobacter chlorophenolicus (strain ATCC 700700 / DSM 12829 / CIP 107037 / JCM 12360 / KCTC 9906 / NCIMB 13794 / A6) (Arthrobacter chlorophenolicus)).